The following is a 131-amino-acid chain: Sec-independent protein translocase protein TatB (131 aa).

A helical transmembrane segment spans residues 1 to 21; the sequence is MFDISFAELVVVGIVALIVIG. 2 stretches are compositionally biased toward polar residues: residues 71-93 and 111-131; these read NSFE…TQSA and PVNT…QPNS. The tract at residues 71–131 is disordered; that stretch reads NSFENSVRSE…APAEPRQPNS (61 aa).

It belongs to the TatB family. The Tat system comprises two distinct complexes: a TatABC complex, containing multiple copies of TatA, TatB and TatC subunits, and a separate TatA complex, containing only TatA subunits. Substrates initially bind to the TatABC complex, which probably triggers association of the separate TatA complex to form the active translocon.

Its subcellular location is the cell inner membrane. Its function is as follows. Part of the twin-arginine translocation (Tat) system that transports large folded proteins containing a characteristic twin-arginine motif in their signal peptide across membranes. Together with TatC, TatB is part of a receptor directly interacting with Tat signal peptides. TatB may form an oligomeric binding site that transiently accommodates folded Tat precursor proteins before their translocation. In Nitrosomonas europaea (strain ATCC 19718 / CIP 103999 / KCTC 2705 / NBRC 14298), this protein is Sec-independent protein translocase protein TatB.